A 686-amino-acid chain; its full sequence is Methionine--tRNA ligase (686 aa).

The 'HIGH' region motif lies at 15-25 (PYANGPIHLGH). Positions 146, 149, 159, and 162 each coordinate Zn(2+). Residues 331–335 (KMSKS) carry the 'KMSKS' region motif. An ATP-binding site is contributed by lysine 334. Positions 584-686 (DFAKIDLRVA…AGVKAGSRVM (103 aa)) constitute a tRNA-binding domain.

The protein belongs to the class-I aminoacyl-tRNA synthetase family. MetG type 1 subfamily. Homodimer. It depends on Zn(2+) as a cofactor.

It is found in the cytoplasm. It catalyses the reaction tRNA(Met) + L-methionine + ATP = L-methionyl-tRNA(Met) + AMP + diphosphate. Functionally, is required not only for elongation of protein synthesis but also for the initiation of all mRNA translation through initiator tRNA(fMet) aminoacylation. This chain is Methionine--tRNA ligase, found in Mannheimia succiniciproducens (strain KCTC 0769BP / MBEL55E).